A 457-amino-acid chain; its full sequence is DNA repair protein RadA (457 aa).

The C4-type zinc finger occupies 10-27 (CQECGYESAKWMGKCPGC). ATP is bound at residue 97 to 104 (GDPGIGKS). Positions 254-258 (KNRFG) match the RadA KNRFG motif motif. Residues 353–457 (DAYVNVAGGV…QDALEVTLGR (105 aa)) are lon-protease-like.

The protein belongs to the RecA family. RadA subfamily.

Its function is as follows. DNA-dependent ATPase involved in processing of recombination intermediates, plays a role in repairing DNA breaks. Stimulates the branch migration of RecA-mediated strand transfer reactions, allowing the 3' invading strand to extend heteroduplex DNA faster. Binds ssDNA in the presence of ADP but not other nucleotides, has ATPase activity that is stimulated by ssDNA and various branched DNA structures, but inhibited by SSB. Does not have RecA's homology-searching function. In Halalkalibacterium halodurans (strain ATCC BAA-125 / DSM 18197 / FERM 7344 / JCM 9153 / C-125) (Bacillus halodurans), this protein is DNA repair protein RadA.